The sequence spans 318 residues: NLP effector protein 7 (318 aa).

Residues 1–19 (MRLFAFLWSSVAFLSTVQA) form the signal peptide. Over residues 23–41 (QTASQTQDDSSTPTPTPTD) the composition is skewed to low complexity. Disordered regions lie at residues 23–42 (QTAS…PTDK) and 51–96 (RTKT…TPDP). Over residues 55–65 (PMATPNRTIMP) the composition is skewed to polar residues. Residue Asn-60 is glycosylated (N-linked (GlcNAc...) asparagine). Residues 73 to 96 (TEPPTPEPTYLPTPSPTPAPTPDP) show a composition bias toward pro residues. The Conserved undecapeptide motif I motif lies at 185–195 (AIMYSWYFPKD). The Hepta-peptide GHRHDWE motif II signature appears at 202 to 208 (GHRHDWE).

It belongs to the Necrosis inducing protein (NPP1) family.

It localises to the secreted. Functionally, secreted effector that contributes moderately to virulence during infection by P.capsici. Does not cause visible reaction of C.annuum for several days after inoculation, but by 7 days after inoculation, small necrotic lesions become visible. Leads only to chlorotic areas, without necrosis at 7 days after non-host N.benthamiana leaves infection. The protein is NLP effector protein 7 of Phytophthora capsici.